Reading from the N-terminus, the 239-residue chain is Purine nucleoside phosphorylase DeoD-type (239 aa).

H5 is a binding site for a purine D-ribonucleoside. Phosphate is bound by residues G21, R25, R44, and 88–91; that span reads RVGS. Residues 180–182 and 204–205 contribute to the a purine D-ribonucleoside site; these read EME and SD. The active-site Proton donor is the D205.

Belongs to the PNP/UDP phosphorylase family. Homohexamer; trimer of homodimers.

The catalysed reaction is a purine D-ribonucleoside + phosphate = a purine nucleobase + alpha-D-ribose 1-phosphate. The enzyme catalyses a purine 2'-deoxy-D-ribonucleoside + phosphate = a purine nucleobase + 2-deoxy-alpha-D-ribose 1-phosphate. Catalyzes the reversible phosphorolytic breakdown of the N-glycosidic bond in the beta-(deoxy)ribonucleoside molecules, with the formation of the corresponding free purine bases and pentose-1-phosphate. This Salmonella agona (strain SL483) protein is Purine nucleoside phosphorylase DeoD-type.